A 110-amino-acid polypeptide reads, in one-letter code: Phosphoribosyl-AMP cyclohydrolase (110 aa).

Aspartate 74 is a Mg(2+) binding site. Cysteine 75 lines the Zn(2+) pocket. Positions 76 and 78 each coordinate Mg(2+). Positions 91 and 98 each coordinate Zn(2+).

This sequence belongs to the PRA-CH family. In terms of assembly, homodimer. Mg(2+) is required as a cofactor. Zn(2+) serves as cofactor.

The protein resides in the cytoplasm. It catalyses the reaction 1-(5-phospho-beta-D-ribosyl)-5'-AMP + H2O = 1-(5-phospho-beta-D-ribosyl)-5-[(5-phospho-beta-D-ribosylamino)methylideneamino]imidazole-4-carboxamide. It participates in amino-acid biosynthesis; L-histidine biosynthesis; L-histidine from 5-phospho-alpha-D-ribose 1-diphosphate: step 3/9. In terms of biological role, catalyzes the hydrolysis of the adenine ring of phosphoribosyl-AMP. The polypeptide is Phosphoribosyl-AMP cyclohydrolase (Lacticaseibacillus paracasei (strain ATCC 334 / BCRC 17002 / CCUG 31169 / CIP 107868 / KCTC 3260 / NRRL B-441) (Lactobacillus paracasei)).